The sequence spans 218 residues: Eukaryotic translation initiation factor 3 subunit K (218 aa).

Position 2 is an N-acetylalanine (Ala-2). A Phosphothreonine modification is found at Thr-28. A PCI domain is found at 42–204 (YDLEANLAVL…SIKPKNIVEK (163 aa)). Ser-217 carries the phosphoserine modification.

Belongs to the eIF-3 subunit K family. In terms of assembly, component of the eukaryotic translation initiation factor 3 (eIF-3) complex, which is composed of 13 subunits: EIF3A, EIF3B, EIF3C, EIF3D, EIF3E, EIF3F, EIF3G, EIF3H, EIF3I, EIF3J, EIF3K, EIF3L and EIF3M. The eIF-3 complex appears to include 3 stable modules: module A is composed of EIF3A, EIF3B, EIF3G and EIF3I; module B is composed of EIF3F, EIF3H, and EIF3M; and module C is composed of EIF3C, EIF3D, EIF3E, EIF3K and EIF3L. EIF3C of module C binds EIF3B of module A and EIF3H of module B, thereby linking the three modules. EIF3J is a labile subunit that binds to the eIF-3 complex via EIF3B. The eIF-3 complex interacts with RPS6KB1 under conditions of nutrient depletion. Mitogenic stimulation leads to binding and activation of a complex composed of MTOR and RPTOR, leading to phosphorylation and release of RPS6KB1 and binding of EIF4B to eIF-3. Interacts with CCND3, but not with CCND1 and CCND2.

The protein localises to the nucleus. Its subcellular location is the cytoplasm. Functionally, component of the eukaryotic translation initiation factor 3 (eIF-3) complex, which is required for several steps in the initiation of protein synthesis. The eIF-3 complex associates with the 40S ribosome and facilitates the recruitment of eIF-1, eIF-1A, eIF-2:GTP:methionyl-tRNAi and eIF-5 to form the 43S pre-initiation complex (43S PIC). The eIF-3 complex stimulates mRNA recruitment to the 43S PIC and scanning of the mRNA for AUG recognition. The eIF-3 complex is also required for disassembly and recycling of post-termination ribosomal complexes and subsequently prevents premature joining of the 40S and 60S ribosomal subunits prior to initiation. The eIF-3 complex specifically targets and initiates translation of a subset of mRNAs involved in cell proliferation, including cell cycling, differentiation and apoptosis, and uses different modes of RNA stem-loop binding to exert either translational activation or repression. The sequence is that of Eukaryotic translation initiation factor 3 subunit K from Bos taurus (Bovine).